A 210-amino-acid polypeptide reads, in one-letter code: Ribonuclease HII (210 aa).

Residues 16-207 (AIVVGVDEVG…VKKCIISTKN (192 aa)) enclose the RNase H type-2 domain. Residues D22, E23, and D116 each contribute to the a divalent metal cation site.

The protein belongs to the RNase HII family. The cofactor is Mn(2+). Mg(2+) serves as cofactor.

It is found in the cytoplasm. It carries out the reaction Endonucleolytic cleavage to 5'-phosphomonoester.. In terms of biological role, endonuclease that specifically degrades the RNA of RNA-DNA hybrids. In Anaplasma phagocytophilum (strain HZ), this protein is Ribonuclease HII.